The primary structure comprises 418 residues: Intracellular coagulation inhibitor 1 (418 aa).

The N-terminal stretch at 1–24 (MKLGDWKFCLLLFQLMFLTNVCLS) is a signal peptide. N-linked (GlcNAc...) asparagine glycans are attached at residues Asn-49 and Asn-404.

The protein belongs to the serpin family. Monomer. Forms a covalent heterodimer with clotting factor C. Interacts with big defensin. Post-translationally, N-glycosylated. Expressed in hemocytes (at protein level).

It is found in the secreted. Serine protease inhibitor that specifically inhibits clotting factor C. Does not inhibit clotting factor B or proclotting enzyme. In Tachypleus tridentatus (Japanese horseshoe crab), this protein is Intracellular coagulation inhibitor 1.